A 223-amino-acid polypeptide reads, in one-letter code: Ribose-5-phosphate isomerase A (223 aa).

Residues 32–35 (TGST), 85–88 (DGAD), and 98–101 (KGGG) contribute to the substrate site. Glu-107 (proton acceptor) is an active-site residue. Residue Lys-125 participates in substrate binding.

It belongs to the ribose 5-phosphate isomerase family. In terms of assembly, homodimer.

It catalyses the reaction aldehydo-D-ribose 5-phosphate = D-ribulose 5-phosphate. It functions in the pathway carbohydrate degradation; pentose phosphate pathway; D-ribose 5-phosphate from D-ribulose 5-phosphate (non-oxidative stage): step 1/1. Catalyzes the reversible conversion of ribose-5-phosphate to ribulose 5-phosphate. This is Ribose-5-phosphate isomerase A from Pseudomonas syringae pv. tomato (strain ATCC BAA-871 / DC3000).